The primary structure comprises 557 residues: Organic cation/carnitine transporter 2 (557 aa).

The Cytoplasmic portion of the chain corresponds to 1-20; it reads MRDYDEVTAFLGEWGPFQRL. The chain crosses the membrane as a helical span at residues 21 to 41; it reads IFFLLSASIIPNGFTGLSSVF. The Extracellular portion of the chain corresponds to 42-142; the sequence is LIATPEHRCR…NLVCEDDWKA (101 aa). Asn-57, Asn-64, and Asn-91 each carry an N-linked (GlcNAc...) asparagine glycan. The chain crosses the membrane as a helical span at residues 143–163; sequence PLTISLFFVGVLLGSFISGQL. Over 164–172 the chain is Cytoplasmic; that stretch reads SDRFGRKNV. The chain crosses the membrane as a helical span at residues 173 to 193; it reads LFVTMGMQTGFSFLQIFSKNF. Topologically, residues 194–197 are extracellular; the sequence is EMFV. Residues 198-218 traverse the membrane as a helical segment; the sequence is VLFVLVGMGQISNYVAAFVLG. 218–225 lines the ATP pocket; that stretch reads GTEILGKS. Topologically, residues 219–232 are cytoplasmic; that stretch reads TEILGKSVRIIFST. The chain crosses the membrane as a helical span at residues 233–253; the sequence is LGVCIFYAFGYMVLPLFAYFI. Residues 254–257 lie on the Extracellular side of the membrane; that stretch reads RDWR. A helical transmembrane segment spans residues 258–278; sequence MLLVALTMPGVLCVALWWFIP. Over 279–341 the chain is Cytoplasmic; it reads ESPRWLISQG…LDLLRTWNIR (63 aa). The chain crosses the membrane as a helical span at residues 342 to 362; it reads MVTIMSIMLWMTISVGYFGLS. At 363-373 the chain is on the extracellular side; that stretch reads LDTPNLHGDIF. A helical membrane pass occupies residues 374–394; that stretch reads VNCFLSAMVEVPAYVLAWLLL. Topologically, residues 395-406 are cytoplasmic; it reads QYLPRRYSMATA. The chain crosses the membrane as a helical span at residues 407-427; sequence LFLGGSVLLFMQLVPPDLYYL. The Extracellular segment spans residues 428-430; sequence ATV. A helical membrane pass occupies residues 431–451; the sequence is LVMVGKFGVTAAFSMVYVYTA. Topologically, residues 452–462 are cytoplasmic; the sequence is ELYPTVVRNMG. A helical transmembrane segment spans residues 463-483; the sequence is VGVSSTASRLGSILSPYFVYL. The Extracellular portion of the chain corresponds to 484–488; the sequence is GAYDR. Phosphotyrosine is present on Tyr-486. The chain crosses the membrane as a helical span at residues 489–509; that stretch reads FLPYILMGSLTILTAILTLFL. The interval 535–557 is disordered; it reads TPSHTRMLKDGQERPTILKSTAF. Thr-550 bears the Phosphothreonine mark.

Belongs to the major facilitator (TC 2.A.1) superfamily. Organic cation transporter (TC 2.A.1.19) family. As to quaternary structure, interacts with PDZK1. In terms of processing, glycosylated. Glycosylation affects the expression levels. Not glycosylated. In terms of tissue distribution, strongly expressed in kidney, skeletal muscle, heart and placenta. Primarily expressed by surface epithelial cells of the colon (at protein level). Expressed in CD68 macrophage and CD43 T-cells but not in CD20 B-cells. In testis, localized to Sertoli cell basal membranes, peritubular myoid cells and Leydig cells.

The protein resides in the cell membrane. The protein localises to the apical cell membrane. It localises to the basal cell membrane. It is found in the endoplasmic reticulum. It carries out the reaction (R)-carnitine(out) + Na(+)(out) = (R)-carnitine(in) + Na(+)(in). The catalysed reaction is glycine betaine(out) + Na(+)(out) = glycine betaine(in) + Na(+)(in). It catalyses the reaction glycine betaine(out) + (R)-carnitine(in) = glycine betaine(in) + (R)-carnitine(out). The enzyme catalyses O-butanoyl-(R)-carnitine(out) + Na(+)(out) = O-butanoyl-(R)-carnitine(in) + Na(+)(in). It carries out the reaction O-acetyl-(R)-carnitine(out) + Na(+)(out) = O-acetyl-(R)-carnitine(in) + Na(+)(in). The catalysed reaction is O-propanoyl-(R)-carnitine(out) + Na(+)(out) = O-propanoyl-(R)-carnitine(in) + Na(+)(in). It catalyses the reaction (S)-carnitine(out) + Na(+)(out) = (S)-carnitine(in) + Na(+)(in). The enzyme catalyses an O-acyl-(R)-carnitine(out) + Na(+)(out) = an O-acyl-(R)-carnitine(in) + Na(+)(in). It carries out the reaction L-glutamyl-L-arginyl-glycyl-L-methionyl-L-threonine(out) + Na(+)(out) = L-glutamyl-L-arginyl-glycyl-L-methionyl-L-threonine(in) + Na(+)(in). The catalysed reaction is N,N-dimethylglycine(out) + Na(+)(out) = N,N-dimethylglycine(in) + Na(+)(in). Inhibited by emetine, quinidine and verapamil. The IC(50) of emetine is 4.2 uM. Not inhibited by valproic acid. Transport of (R)-carnitine is stimulated by cholesterol in the plasma membrane. Functionally, sodium-ion dependent, high affinity carnitine transporter. Involved in the active cellular uptake of carnitine. Transports one sodium ion with one molecule of carnitine. Also transports organic cations such as tetraethylammonium (TEA) without the involvement of sodium. Relative uptake activity ratio of carnitine to TEA is 11.3. In intestinal epithelia, transports the quorum-sensing pentapeptide CSF (competence and sporulation factor) from B.subtilis which induces cytoprotective heat shock proteins contributing to intestinal homeostasis. May also contribute to regulate the transport of organic compounds in testis across the blood-testis-barrier. Retained in the ER, unable to perform carnitine uptake. The sequence is that of Organic cation/carnitine transporter 2 from Homo sapiens (Human).